The sequence spans 388 residues: Basigin (388 aa).

The signal sequence occupies residues 1–22 (MAAALLLALAFTFLSGQGACAA). At 23–326 (AGFLKAPMSQ…ISLRVRSRLA (304 aa)) the chain is on the extracellular side. Residues 37 to 120 (GGSVVLHCEA…SSDPDRNHLT (84 aa)) enclose the Ig-like domain. Cystine bridges form between cysteine 44/cysteine 108, cysteine 157/cysteine 203, and cysteine 242/cysteine 304. Residues 138-219 (EPGTIVTSVQ…VGRGNINVEG (82 aa)) enclose the Ig-like C2-type domain. 3 N-linked (GlcNAc...) asparagine glycosylation sites follow: asparagine 160, asparagine 269, and asparagine 305. Residues 221–320 (PRIKVGKKSE…GSARETISLR (100 aa)) enclose the Ig-like V-type domain. A helical transmembrane segment spans residues 327–347 (ALWPFLGIVAEVLVLVTIIFI). Residues 348 to 388 (YEKRRKPDQTLDEDDPGAAPLKGSGSHLNDKDKNVRQRNAT) are Cytoplasmic-facing. The disordered stretch occupies residues 355-388 (DQTLDEDDPGAAPLKGSGSHLNDKDKNVRQRNAT). Phosphothreonine is present on threonine 357. Serine 371 carries the post-translational modification Phosphoserine.

As to quaternary structure, homooligomer. Interacts with NXNL1, SLC2A1 and SLC16A1/GLUT1. Interacts with XKR8; promoting its localization at the cell membrane. In terms of assembly, homooligomer. Interacts with SLC16A1; interaction mediates SLC16A1 targeting to the plasma membrane. Interacts with SLC16A3; interaction mediates SLC16A3 targeting to the plasma membrane. Interacts with VEGFA, KDR/VEGFR2, PPIA/CYPA, SLC16A12, SLC16A11, ATP1B2, MAG, L1CAM and AJAP1. Interacts with PPIL2; regulates BSG transport to the cell membrane. Interacts with SLC16A6; this interaction mediates targeting to the plasma membrane. As to expression, expressed in the skeletal muscle, liver, small intestine, kidney, testis, brain, heart and spleen. Also present in various immature cells and endothelia.

It localises to the cell membrane. The protein resides in the photoreceptor inner segment. Its subcellular location is the cell projection. It is found in the cilium. The protein localises to the photoreceptor outer segment. It localises to the endoplasmic reticulum membrane. The protein resides in the basolateral cell membrane. Functionally, essential for normal retinal maturation and development. Acts as a retinal cell surface receptor for NXNL1 and plays an important role in NXNL1-mediated survival of retinal cone photoreceptors. In association with glucose transporter SLC16A1/GLUT1 and NXNL1, promotes retinal cone survival by enhancing aerobic glycolysis and accelerating the entry of glucose into photoreceptors. Its function is as follows. Signaling receptor for cyclophilins, essential for PPIA/CYPA and PPIB/CYPB-dependent signaling related to chemotaxis and adhesion of immune cells. Plays an important role in targeting the monocarboxylate transporters SLC16A1/GLUT1 and SLC16A3 to the plasma membrane. Acts as a coreceptor for vascular endothelial growth factor receptor 2 (KDR/VEGFR2) in endothelial cells enhancing its VEGFA-mediated activation and downstream signaling. Promotes angiogenesis through EPAS1/HIF2A-mediated up-regulation of VEGFA and KDR/VEGFR2 in endothelial cells. Plays an important role in spermatogenesis; mediates interactions between germ cells and Sertoli cell and is essential for the development/differentiation of germ cells to round spermatids. This is Basigin (Bsg) from Rattus norvegicus (Rat).